The primary structure comprises 111 residues: uncharacterized protein (111 aa).

2 consecutive transmembrane segments (helical) span residues 29 to 49 (LLNF…ATAV) and 52 to 72 (ACFA…YLLA).

Its subcellular location is the membrane. This is an uncharacterized protein from Saccharomyces cerevisiae (strain ATCC 204508 / S288c) (Baker's yeast).